The primary structure comprises 211 residues: Superoxide dismutase [Mn] (211 aa).

Positions 27, 82, 165, and 169 each coordinate Mn(2+).

It belongs to the iron/manganese superoxide dismutase family. As to quaternary structure, homodimer. Requires Mn(2+) as cofactor.

It catalyses the reaction 2 superoxide + 2 H(+) = H2O2 + O2. In terms of biological role, destroys superoxide anion radicals which are normally produced within the cells and which are toxic to biological systems. The polypeptide is Superoxide dismutase [Mn] (sodA) (Bordetella pertussis (strain Tohama I / ATCC BAA-589 / NCTC 13251)).